The chain runs to 122 residues: NADPH-dependent 7-cyano-7-deazaguanine reductase (122 aa).

Cys34 acts as the Thioimide intermediate in catalysis. The Proton donor role is filled by Asp41. Residues 56–58 (VEL) and 75–76 (HE) contribute to the substrate site.

It belongs to the GTP cyclohydrolase I family. QueF type 1 subfamily.

The protein resides in the cytoplasm. It catalyses the reaction 7-aminomethyl-7-carbaguanine + 2 NADP(+) = 7-cyano-7-deazaguanine + 2 NADPH + 3 H(+). It participates in tRNA modification; tRNA-queuosine biosynthesis. Its function is as follows. Catalyzes the NADPH-dependent reduction of 7-cyano-7-deazaguanine (preQ0) to 7-aminomethyl-7-deazaguanine (preQ1). This is NADPH-dependent 7-cyano-7-deazaguanine reductase from Anaeromyxobacter dehalogenans (strain 2CP-1 / ATCC BAA-258).